The chain runs to 123 residues: uncharacterized protein (123 aa).

3 helical membrane-spanning segments follow: residues 7 to 29 (VKHL…FDAV), 44 to 66 (FFIH…VHRI), and 79 to 101 (LGLY…AAMA).

The protein resides in the cell membrane. This is an uncharacterized protein from Bacillus subtilis (strain 168).